Reading from the N-terminus, the 124-residue chain is Ribonuclease P protein component 2 (124 aa).

The protein belongs to the eukaryotic/archaeal RNase P protein component 2 family. Consists of a catalytic RNA component and at least 4-5 protein subunits.

The protein localises to the cytoplasm. It catalyses the reaction Endonucleolytic cleavage of RNA, removing 5'-extranucleotides from tRNA precursor.. Part of ribonuclease P, a protein complex that generates mature tRNA molecules by cleaving their 5'-ends. The chain is Ribonuclease P protein component 2 from Methanothermobacter thermautotrophicus (strain ATCC 29096 / DSM 1053 / JCM 10044 / NBRC 100330 / Delta H) (Methanobacterium thermoautotrophicum).